Consider the following 264-residue polypeptide: Phosphonoacetaldehyde hydrolase (264 aa).

The Nucleophile role is filled by aspartate 9. Mg(2+) contacts are provided by aspartate 9 and alanine 11. Residue lysine 50 is the Schiff-base intermediate with substrate of the active site. Aspartate 183 contributes to the Mg(2+) binding site.

This sequence belongs to the HAD-like hydrolase superfamily. PhnX family. Homodimer. Mg(2+) serves as cofactor.

It carries out the reaction phosphonoacetaldehyde + H2O = acetaldehyde + phosphate + H(+). Its function is as follows. Involved in phosphonate degradation. This is Phosphonoacetaldehyde hydrolase from Bacillus thuringiensis (strain Al Hakam).